The chain runs to 216 residues: uncharacterized protein (216 aa).

A compositionally biased stretch (polar residues) spans 182-193 (STSNASVNSDDA). A disordered region spans residues 182-204 (STSNASVNSDDASTAELGPTSEE).

This is an uncharacterized protein from Caenorhabditis elegans.